Here is a 419-residue protein sequence, read N- to C-terminus: N-acylneuraminate cytidylyltransferase (419 aa).

This sequence belongs to the CMP-NeuNAc synthase family. In terms of assembly, monomer. May form aggregates. Mg(2+) is required as a cofactor. Mn(2+) serves as cofactor.

It localises to the cytoplasm. It carries out the reaction an N-acylneuraminate + CTP = a CMP-N-acyl-beta-neuraminate + diphosphate. Its activity is regulated as follows. Inhibited by the CTP analogs 5-mercuri-CTP and CTP-2',3'-dialdehyde. Functionally, catalyzes the formation of CMP-N-acetylneuraminic acid (CMP-NeuNAc), which is essential for the formation of the capsule. The protein is N-acylneuraminate cytidylyltransferase (neuA) of Escherichia coli O18:K1:H7 (strain RS218 / NMEC).